The chain runs to 338 residues: Endonuclease V (338 aa).

Mg(2+) contacts are provided by D52 and D126. The disordered stretch occupies residues 253-338 (QLGVAPAQRK…PSPAWVQSPP (86 aa)). Composition is skewed to basic and acidic residues over residues 260–270 (QRKDRSQKEQR) and 287–323 (RPPECDGRDSSSDRKAPEPGFQEQKDQQLEGTGHQED). Positions 328-338 (PPSPAWVQSPP) are enriched in pro residues.

Belongs to the endonuclease V family. In terms of assembly, monomer. Interacts with PABPC1; the interaction is RNA-dependent and stimulates ENDOV activity. The cofactor is Mg(2+). In terms of tissue distribution, highest levels detected in liver with high levels also found in heart, kidney and testis. Expressed at low levels in brain.

It is found in the cytoplasm. The protein resides in the nucleus. It localises to the nucleolus. The protein localises to the stress granule. Functionally, endoribonuclease that specifically cleaves inosine-containing RNAs: cleaves RNA at the second phosphodiester bond 3' to inosine. Active against both single-stranded and double-stranded RNAs. Has strong preference for single-stranded RNAs (ssRNAs) toward double-stranded RNAs (dsRNAs). Cleaves mRNAs and tRNAs containing inosine. Also able to cleave structure-specific dsRNA substrates containing the specific sites 5'-IIUI-3' and 5'-UIUU-3'. Inosine is present in a number of RNAs following editing; the function of inosine-specific endoribonuclease is still unclear: it could either play a regulatory role in edited RNAs, or be involved in antiviral response by removing the hyperedited long viral dsRNA genome that has undergone A-to-I editing. Binds branched DNA structures. This is Endonuclease V (Endov) from Mus musculus (Mouse).